The chain runs to 95 residues: Aspartyl/glutamyl-tRNA(Asn/Gln) amidotransferase subunit C (95 aa).

It belongs to the GatC family. As to quaternary structure, heterotrimer of A, B and C subunits.

It carries out the reaction L-glutamyl-tRNA(Gln) + L-glutamine + ATP + H2O = L-glutaminyl-tRNA(Gln) + L-glutamate + ADP + phosphate + H(+). The enzyme catalyses L-aspartyl-tRNA(Asn) + L-glutamine + ATP + H2O = L-asparaginyl-tRNA(Asn) + L-glutamate + ADP + phosphate + 2 H(+). In terms of biological role, allows the formation of correctly charged Asn-tRNA(Asn) or Gln-tRNA(Gln) through the transamidation of misacylated Asp-tRNA(Asn) or Glu-tRNA(Gln) in organisms which lack either or both of asparaginyl-tRNA or glutaminyl-tRNA synthetases. The reaction takes place in the presence of glutamine and ATP through an activated phospho-Asp-tRNA(Asn) or phospho-Glu-tRNA(Gln). This is Aspartyl/glutamyl-tRNA(Asn/Gln) amidotransferase subunit C from Rhodospirillum rubrum (strain ATCC 11170 / ATH 1.1.1 / DSM 467 / LMG 4362 / NCIMB 8255 / S1).